Reading from the N-terminus, the 320-residue chain is Probable cell division protein WhiA (320 aa).

The H-T-H motif DNA-binding region spans 276 to 310; that stretch reads TLKELGEMVAGGKISKSGINHRLRKIDEIAERLRA.

The protein belongs to the WhiA family.

Involved in cell division and chromosome segregation. This is Probable cell division protein WhiA from Geobacillus thermodenitrificans (strain NG80-2).